The chain runs to 337 residues: Vegetative-specific protein H5 (337 aa).

Positions 88–90 (HGG) match the Involved in the stabilization of the negatively charged intermediate by the formation of the oxyanion hole motif. Residues Ser161, Asp261, and His291 contribute to the active site.

This sequence belongs to the 'GDXG' lipolytic enzyme family.

The protein is Vegetative-specific protein H5 (cinB) of Dictyostelium discoideum (Social amoeba).